The chain runs to 115 residues: Non-specific lipid-transfer protein 4.3 (115 aa).

Residues 1–25 (MARAAATQLVLVAMVAAMLLVATDA) form the signal peptide. 4 disulfides stabilise this stretch: Cys-29–Cys-77, Cys-39–Cys-54, Cys-55–Cys-97, and Cys-75–Cys-111.

The protein belongs to the plant LTP family.

Functionally, plant non-specific lipid-transfer proteins transfer phospholipids as well as galactolipids across membranes. May play a role in wax or cutin deposition in the cell walls of expanding epidermal cells and certain secretory tissues. The sequence is that of Non-specific lipid-transfer protein 4.3 (LTP4.3) from Hordeum vulgare (Barley).